A 346-amino-acid chain; its full sequence is Large ribosomal subunit protein uL10 (346 aa).

The disordered stretch occupies residues E305–G346. Positions A322–L337 are enriched in acidic residues.

The protein belongs to the universal ribosomal protein uL10 family. In terms of assembly, part of the 50S ribosomal subunit. Forms part of the ribosomal stalk which helps the ribosome interact with GTP-bound translation factors. Forms a heptameric L10(L12)2(L12)2(L12)2 complex, where L10 forms an elongated spine to which the L12 dimers bind in a sequential fashion.

Functionally, forms part of the ribosomal stalk, playing a central role in the interaction of the ribosome with GTP-bound translation factors. This chain is Large ribosomal subunit protein uL10, found in Ignicoccus hospitalis (strain KIN4/I / DSM 18386 / JCM 14125).